Reading from the N-terminus, the 405-residue chain is MQGAFTDNTNNTGSEKETNVVIVRYGELALKSPGVRNWYEKILMKNIAAMLDSKNIPYSLMRREWGRIFIETTDPRAAGAAADVFGVVSTSSALITKPELDSAAETCAFLGKKIIQEGESFAIRARRSGNHSFSSADIGRACGDAVWNMLESEGKHPKVNLGSPDREIFVEMRQNLAYVYLETVKGVGGLPLGTQGKMVVLMSGGLDSPVAAWLMMKRGVMIIPVYCNTSPYAENAAKERAYDCIRQLQTWASGHQFTTYEIPHGPNLRSFIEMCDRKNTCLLCKRMMYREAYEIMKKEGASGIITGSSLGQVASQTAANMHAEIYQLAIPIYHPLIAFDKSEIIDIARKIGTYDISTRSAGSCTAVPERPEVKANYDLIVLEEKRLDIENMVSEALKAAKVLKL.

Residues proline 75–threonine 183 form the THUMP domain. ATP-binding positions include leucine 201–methionine 202, lysine 285, glycine 307, and glutamine 316.

Belongs to the ThiI family.

Its subcellular location is the cytoplasm. The catalysed reaction is [ThiI sulfur-carrier protein]-S-sulfanyl-L-cysteine + a uridine in tRNA + 2 reduced [2Fe-2S]-[ferredoxin] + ATP + H(+) = [ThiI sulfur-carrier protein]-L-cysteine + a 4-thiouridine in tRNA + 2 oxidized [2Fe-2S]-[ferredoxin] + AMP + diphosphate. It carries out the reaction [ThiS sulfur-carrier protein]-C-terminal Gly-Gly-AMP + S-sulfanyl-L-cysteinyl-[cysteine desulfurase] + AH2 = [ThiS sulfur-carrier protein]-C-terminal-Gly-aminoethanethioate + L-cysteinyl-[cysteine desulfurase] + A + AMP + 2 H(+). The protein operates within cofactor biosynthesis; thiamine diphosphate biosynthesis. Its function is as follows. Catalyzes the ATP-dependent transfer of a sulfur to tRNA to produce 4-thiouridine in position 8 of tRNAs, which functions as a near-UV photosensor. Also catalyzes the transfer of sulfur to the sulfur carrier protein ThiS, forming ThiS-thiocarboxylate. This is a step in the synthesis of thiazole, in the thiamine biosynthesis pathway. The sulfur is donated as persulfide by IscS. The protein is Probable tRNA sulfurtransferase of Methanosarcina mazei (strain ATCC BAA-159 / DSM 3647 / Goe1 / Go1 / JCM 11833 / OCM 88) (Methanosarcina frisia).